The primary structure comprises 181 residues: Large ribosomal subunit protein uL6 (181 aa).

It belongs to the universal ribosomal protein uL6 family. As to quaternary structure, part of the 50S ribosomal subunit.

In terms of biological role, this protein binds to the 23S rRNA, and is important in its secondary structure. It is located near the subunit interface in the base of the L7/L12 stalk, and near the tRNA binding site of the peptidyltransferase center. In Synechococcus sp. (strain JA-3-3Ab) (Cyanobacteria bacterium Yellowstone A-Prime), this protein is Large ribosomal subunit protein uL6.